The primary structure comprises 434 residues: Glutamyl-tRNA reductase (434 aa).

Residues 52 to 55 (TCNR), S115, 120 to 122 (ETQ), and Q126 each bind substrate. The active-site Nucleophile is C53. 195-200 (GAGEMI) contacts NADP(+).

Belongs to the glutamyl-tRNA reductase family. In terms of assembly, homodimer.

It catalyses the reaction (S)-4-amino-5-oxopentanoate + tRNA(Glu) + NADP(+) = L-glutamyl-tRNA(Glu) + NADPH + H(+). The protein operates within porphyrin-containing compound metabolism; protoporphyrin-IX biosynthesis; 5-aminolevulinate from L-glutamyl-tRNA(Glu): step 1/2. Its function is as follows. Catalyzes the NADPH-dependent reduction of glutamyl-tRNA(Glu) to glutamate 1-semialdehyde (GSA). The chain is Glutamyl-tRNA reductase from Cupriavidus metallidurans (strain ATCC 43123 / DSM 2839 / NBRC 102507 / CH34) (Ralstonia metallidurans).